Reading from the N-terminus, the 168-residue chain is Photosystem I assembly protein Ycf3 (168 aa).

3 TPR repeats span residues 35-68 (AFTY…EIDP), 72-105 (SYIL…NPFL), and 120-153 (GEQA…TPGN).

Belongs to the Ycf3 family.

It is found in the plastid. It localises to the chloroplast thylakoid membrane. Essential for the assembly of the photosystem I (PSI) complex. May act as a chaperone-like factor to guide the assembly of the PSI subunits. This is Photosystem I assembly protein Ycf3 from Atropa belladonna (Belladonna).